The primary structure comprises 376 residues: Cytochrome-c peroxidase IdrP1 (376 aa).

An N-terminal signal peptide occupies residues 1–24 (MGHIRSIRLALAVAAVCTAASAAA). 2 Cytochrome c domains span residues 49–157 (DKVA…AAFK) and 203–354 (AEAQ…EALS). Heme c is bound by residues C71, C74, H75, C218, C221, and H222.

As to quaternary structure, the iodate reductase (Idr) complex is composed of a molybdopterin-dependent iodate reductase (IdrA and IdrB subunits) and two associated peroxidases (IdrP1 and IdrP2). Heme c serves as cofactor.

The protein resides in the periplasm. It catalyses the reaction 2 Fe(II)-[cytochrome c] + H2O2 + 2 H(+) = 2 Fe(III)-[cytochrome c] + 2 H2O. In terms of biological role, involved in iodate respiration. May play a critical role in detoxification of inadvertent H(2)O(2) generated by the iodate reductase IdrA/IdrB. The protein is Cytochrome-c peroxidase IdrP1 of Denitromonas iodatirespirans.